The following is a 234-amino-acid chain: Ubiquinone biosynthesis O-methyltransferase (234 aa).

R39, G59, D80, and M124 together coordinate S-adenosyl-L-methionine.

The protein belongs to the methyltransferase superfamily. UbiG/COQ3 family.

The enzyme catalyses a 3-demethylubiquinol + S-adenosyl-L-methionine = a ubiquinol + S-adenosyl-L-homocysteine + H(+). The catalysed reaction is a 3-(all-trans-polyprenyl)benzene-1,2-diol + S-adenosyl-L-methionine = a 2-methoxy-6-(all-trans-polyprenyl)phenol + S-adenosyl-L-homocysteine + H(+). The protein operates within cofactor biosynthesis; ubiquinone biosynthesis. Functionally, O-methyltransferase that catalyzes the 2 O-methylation steps in the ubiquinone biosynthetic pathway. The polypeptide is Ubiquinone biosynthesis O-methyltransferase (Aliivibrio fischeri (strain ATCC 700601 / ES114) (Vibrio fischeri)).